The sequence spans 527 residues: MSDTLTADVIGRRVEVNGEHATVRFAGVVPPVAGPWLGVEWDNPERGKHDGSHEGTVYFKCRHPTGGSFIRPNKVNFGTDFLTAIKNRYVLEDGPEEDRKEQIVTIGNKPVETIGFDSIMKQQSQLSKLQEVSLRNCAVSCAGEKGGVAEACPNIRKVDLSKNLLSSWDEVIHIADQLRHLEVLNVSENKLKFPSGSVLTGTLSVLKVLVLNQTGITWAEVLRCVAGCPGLEELYLESNNIFISERPTDVLQTVKLLDLSSNQLIDENQLYLIAHLPRLEQLILSDTGISSLHFPDAGIGCKTSMFPSLKYLVVNDNQISQWSFFNELEKLPSLRALSCLRNPLTKEDKEAETARLLIIASIGQLKTLNKCEILPEERRRAELDYRKAFGNEWKQAGGHKDPEKNRLSEEFLTAHPRYQFLCLKYGAPEDWELKTQQPLMLKNQLLTLKIKYPHQLDQKVLEKQLPGSMTIQKVKGLLSRLLKVPVSDLLLSYESPKKPGREIELENDLKSLQFYSVENGDCLLVRW.

At Ser2 the chain carries N-acetylserine. Positions Gly27 to Arg71 constitute a CAP-Gly domain. LRR repeat units lie at residues Asn154 to Ala175, His180 to Thr200, Val205 to Ala226, Gly230 to Gln252, Thr253 to Ala274, Arg278 to Ile299, and Ser308 to Glu329. One can recognise an LRRCT domain in the interval Asn342 to Asp384. Lys463 carries the post-translational modification N6-acetyllysine. Ser495 is subject to Phosphoserine.

This sequence belongs to the TBCE family. As to quaternary structure, supercomplex made of cofactors A to E. Cofactors A and D function by capturing and stabilizing tubulin in a quasi-native conformation. Cofactor E binds to the cofactor D-tubulin complex; interaction with cofactor C then causes the release of tubulin polypeptides that are committed to the native state. Cofactors B and E can form a heterodimer which binds to alpha-tubulin and enhances their ability to dissociate tubulin heterodimers. Interacts with TBCD.

It is found in the cytoplasm. It localises to the cytoskeleton. Functionally, tubulin-folding protein; involved in the second step of the tubulin folding pathway and in the regulation of tubulin heterodimer dissociation. Required for correct organization of microtubule cytoskeleton and mitotic splindle, and maintenance of the neuronal microtubule network. The protein is Tubulin-specific chaperone E (TBCE) of Homo sapiens (Human).